Here is a 372-residue protein sequence, read N- to C-terminus: Mitogen-activated protein kinase spk1 (372 aa).

Residues Met-1–Ser-25 show a composition bias toward polar residues. Residues Met-1–His-29 form a disordered region. Residues Tyr-39 to Val-327 enclose the Protein kinase domain. Residues Ile-45 to Val-53 and Lys-68 each bind ATP. Asp-163 functions as the Proton acceptor in the catalytic mechanism. Position 199 is a phosphothreonine (Thr-199). The TXY signature appears at Thr-199 to Tyr-201. Tyr-201 is subject to Phosphotyrosine.

It belongs to the protein kinase superfamily. CMGC Ser/Thr protein kinase family. MAP kinase subfamily. It depends on Mg(2+) as a cofactor. In terms of processing, dually phosphorylated on Thr-199 and Tyr-201, which activates the enzyme.

The protein resides in the nucleus. It carries out the reaction L-seryl-[protein] + ATP = O-phospho-L-seryl-[protein] + ADP + H(+). The enzyme catalyses L-threonyl-[protein] + ATP = O-phospho-L-threonyl-[protein] + ADP + H(+). Its activity is regulated as follows. Activated by tyrosine and threonine phosphorylation. Involved in mating signal transduction pathway. The chain is Mitogen-activated protein kinase spk1 (spk1) from Schizosaccharomyces pombe (strain 972 / ATCC 24843) (Fission yeast).